Reading from the N-terminus, the 860-residue chain is Tetratricopeptide repeat protein 13 (860 aa).

TPR repeat units lie at residues 143–176 (TNEE…EPDL), 216–248 (PEVF…LQPS), 249–282 (ARLY…NKNQ), 284–316 (IAML…KVDF), 317–350 (IDAY…NQNH), 352–384 (QTLQ…EPYN), and 386–418 (VCQY…DPLP).

The sequence is that of Tetratricopeptide repeat protein 13 (TTC13) from Homo sapiens (Human).